Reading from the N-terminus, the 331-residue chain is Vitamin B12 import system permease protein BtuC (331 aa).

Transmembrane regions (helical) follow at residues 20 to 42 (LLIG…WLSP), 62 to 84 (LLAA…VLLG), 91 to 113 (GVVG…FPSL), 117 to 136 (VAFM…LLVV), 148 to 170 (LLLV…FYFS), 190 to 209 (SWYQ…WLVL), 240 to 262 (LAIA…VGLV), 277 to 299 (LLLP…IARL), and 306 to 325 (LPLG…WMLV).

It belongs to the binding-protein-dependent transport system permease family. FecCD subfamily. As to quaternary structure, the complex is composed of two ATP-binding proteins (BtuD), two transmembrane proteins (BtuC) and a solute-binding protein (BtuF).

It is found in the cell inner membrane. Functionally, part of the ABC transporter complex BtuCDF involved in vitamin B12 import. Involved in the translocation of the substrate across the membrane. The polypeptide is Vitamin B12 import system permease protein BtuC (Vibrio cholerae serotype O1 (strain ATCC 39315 / El Tor Inaba N16961)).